A 237-amino-acid chain; its full sequence is Synapse differentiation-inducing gene protein 1-like (237 aa).

Disordered stretches follow at residues 1-23 (MESL…HRPY), 84-111 (AGSC…PGQA), and 127-148 (ELQG…ESEC). Topologically, residues 1 to 161 (MESLSELQNP…FLTLPPRDHL (161 aa)) are extracellular. Positions 129–148 (QGQEDSQEEESDGTSSESEC) are enriched in acidic residues. A helical transmembrane segment spans residues 162-182 (GLTLFSMLCCFWPLGIAAFYF). Residues 183-204 (SQGTSKAISKGDFRLASTTSRR) lie on the Cytoplasmic side of the membrane. The helical transmembrane segment at 205–225 (ALFLATLSIAVGAGLYVAVVV) threads the bilayer. The Extracellular segment spans residues 226–237 (ALAAYMSQNGHG).

This sequence belongs to the CD225/Dispanin family. As to expression, expression is restricted to the caudate-putamen. Down-regulated in R6/2 transgenic mice, a model for Huntington disease.

The protein resides in the membrane. It is found in the golgi apparatus. Its subcellular location is the cis-Golgi network. The sequence is that of Synapse differentiation-inducing gene protein 1-like (Syndig1l) from Mus musculus (Mouse).